Here is a 375-residue protein sequence, read N- to C-terminus: DNA replication and repair protein RecF (375 aa).

Residue 30–37 (GLNGQGKT) coordinates ATP.

Belongs to the RecF family.

The protein resides in the cytoplasm. The RecF protein is involved in DNA metabolism; it is required for DNA replication and normal SOS inducibility. RecF binds preferentially to single-stranded, linear DNA. It also seems to bind ATP. This is DNA replication and repair protein RecF from Halothermothrix orenii (strain H 168 / OCM 544 / DSM 9562).